Here is a 331-residue protein sequence, read N- to C-terminus: DNA-directed RNA polymerase subunit alpha (331 aa).

The alpha N-terminal domain (alpha-NTD) stretch occupies residues 1 to 225 (MLDIAMPKLE…QYSSIIADFN (225 aa)). The interval 243 to 331 (PSEIYDMPIE…AARLNDGSAE (89 aa)) is alpha C-terminal domain (alpha-CTD).

It belongs to the RNA polymerase alpha chain family. In terms of assembly, homodimer. The RNAP catalytic core consists of 2 alpha, 1 beta, 1 beta' and 1 omega subunit. When a sigma factor is associated with the core the holoenzyme is formed, which can initiate transcription.

The catalysed reaction is RNA(n) + a ribonucleoside 5'-triphosphate = RNA(n+1) + diphosphate. In terms of biological role, DNA-dependent RNA polymerase catalyzes the transcription of DNA into RNA using the four ribonucleoside triphosphates as substrates. This Herpetosiphon aurantiacus (strain ATCC 23779 / DSM 785 / 114-95) protein is DNA-directed RNA polymerase subunit alpha.